The sequence spans 241 residues: MSMLFYTLITAFLIGIQAELHSESNVPAGHTIPQAHWTKLQHSLDTALRRARSAPAAAIAARVAGQTRNITVDPRLFKKRRLRSPRVLFSTQPPPEAADTQDLDFEVGGAAPFNRTHRSKRSSSHPIFHRGEFSVCDSVSVWVGDKTTATDIKGKEVMVLGEVNINNSVFKQYFFETKCRDPNPVDSGCRGIDSKHWNSYCTTTHTFVKALTMDGKQAAWRFIRIDTACVCVLSRKAVRRA.

Positions 1-18 (MSMLFYTLITAFLIGIQA) are cleaved as a signal peptide. Positions 19 to 121 (ELHSESNVPA…PFNRTHRSKR (103 aa)) are excised as a propeptide. N-linked (GlcNAc...) asparagine glycans are attached at residues asparagine 69, asparagine 114, and asparagine 166. 3 disulfides stabilise this stretch: cysteine 136–cysteine 201, cysteine 179–cysteine 229, and cysteine 189–cysteine 231. Tyrosine 173 and lysine 209 together coordinate a 1-acyl-sn-glycero-3-phospho-(1D-myo-inositol). Residue lysine 209 coordinates a 1-acyl-sn-glycero-3-phospho-L-serine.

It belongs to the NGF-beta family. Homodimer. The homodimer interacts with a single NTRK1 chain. The homodimer interacts with a single NGFR chain. The NGF dimer interacts with a single SORCS2 chain (via extracellular domain). The NGF precursor (proNGF) binds to a receptor complex formed by SORT1 and NGFR, which leads to NGF endocytosis. Both mature NGF and the immature NGF precursor (proNGF) interact with SORCS2 and with the heterodimer formed by SORCS2 and NGFR (via extracellular domains). The NGF precursor (proNGF) has much higher affinity for SORCS2 than mature NGF. The NGF precursor (proNGF) has much higher affinity for SORT1 than mature NGF. Interacts with ADAM10 in a divalent cation-dependent manner. Interacts with SORCS3.

The protein resides in the secreted. It localises to the endosome lumen. Nerve growth factor is important for the development and maintenance of the sympathetic and sensory nervous systems. Extracellular ligand for the NTRK1 and NGFR receptors, activates cellular signaling cascades to regulate neuronal proliferation, differentiation and survival. The immature NGF precursor (proNGF) functions as a ligand for the heterodimeric receptor formed by SORCS2 and NGFR, and activates cellular signaling cascades that lead to inactivation of RAC1 and/or RAC2, reorganization of the actin cytoskeleton and neuronal growth cone collapse. In contrast to mature NGF, the precursor form (proNGF) promotes neuronal apoptosis (in vitro). Inhibits metalloproteinase-dependent proteolysis of platelet glycoprotein VI. Binds lysophosphatidylinositol and lysophosphatidylserine between the two chains of the homodimer. The lipid-bound form promotes histamine relase from mast cells, contrary to the lipid-free form. The sequence is that of Beta-nerve growth factor (NGF) from Gorilla gorilla gorilla (Western lowland gorilla).